Consider the following 532-residue polypeptide: Muscarinic acetylcholine receptor M5 (532 aa).

The Extracellular segment spans residues 1 to 29 (MEGESYHNETTVNGTPVNHQALERHGLWE). N8 is a glycosylation site (N-linked (GlcNAc...) asparagine). Residues 30–53 (VITIAAVTAVVSLMTIVGNVLVMI) form a helical membrane-spanning segment. Topologically, residues 54–66 (SFKVNSQLKTVNN) are cytoplasmic. A helical membrane pass occupies residues 67–87 (YYLLSLACADLIIGIFSMNLY). Residues 88 to 104 (TTYILMGRWVLGSLACD) are Extracellular-facing. Cysteines 103 and 183 form a disulfide. The helical transmembrane segment at 105-126 (LWLALDYVASNASVMNLLVISF) threads the bilayer. The Cytoplasmic segment spans residues 127-146 (DRYFSITRPLTYRAKRTPKR). The helical transmembrane segment at 147–169 (AGIMIGLAWLVSFILWAPAILCW) threads the bilayer. Residues 170–191 (QYLVGKRTVPPDECQIQFLSEP) are Extracellular-facing. Residues 192 to 214 (TITFGTAIAAFYIPVSVMTILYC) form a helical membrane-spanning segment. Residues 215 to 443 (RIYRETEKRT…LVKERKAAQT (229 aa)) lie on the Cytoplasmic side of the membrane. The disordered stretch occupies residues 265-290 (VRNQASWSSSRRSTSTTGKPTQATDL). The span at 270–281 (SWSSSRRSTSTT) shows a compositional bias: low complexity. Residues 444-464 (LSAILLAFIITWTPYNIMVLV) form a helical membrane-spanning segment. Over 465 to 478 (STFCDKCVPVTLWH) the chain is Extracellular. Residues 479 to 498 (LGYWLCYVNSTINPICYALC) form a helical membrane-spanning segment. Residues 499 to 532 (NRTFRKTFKLLLLCRWKKKKVEEKLYWQGNSKLP) lie on the Cytoplasmic side of the membrane. Phosphothreonine occurs at positions 501 and 505.

This sequence belongs to the G-protein coupled receptor 1 family. Muscarinic acetylcholine receptor subfamily. CHRM5 sub-subfamily.

The protein resides in the cell membrane. The protein localises to the postsynaptic cell membrane. Its function is as follows. The muscarinic acetylcholine receptor mediates various cellular responses, including inhibition of adenylate cyclase, breakdown of phosphoinositides and modulation of potassium channels through the action of G proteins. Primary transducing effect is Pi turnover. The chain is Muscarinic acetylcholine receptor M5 (Chrm5) from Mus musculus (Mouse).